Reading from the N-terminus, the 483-residue chain is Glutamyl-tRNA(Gln) amidotransferase subunit A (483 aa).

Residues Lys-75 and Ser-150 each act as charge relay system in the active site. Ser-174 (acyl-ester intermediate) is an active-site residue.

The protein belongs to the amidase family. GatA subfamily. Heterotrimer of A, B and C subunits.

It carries out the reaction L-glutamyl-tRNA(Gln) + L-glutamine + ATP + H2O = L-glutaminyl-tRNA(Gln) + L-glutamate + ADP + phosphate + H(+). Allows the formation of correctly charged Gln-tRNA(Gln) through the transamidation of misacylated Glu-tRNA(Gln) in organisms which lack glutaminyl-tRNA synthetase. The reaction takes place in the presence of glutamine and ATP through an activated gamma-phospho-Glu-tRNA(Gln). This Microcystis aeruginosa (strain NIES-843 / IAM M-2473) protein is Glutamyl-tRNA(Gln) amidotransferase subunit A.